A 34-amino-acid polypeptide reads, in one-letter code: U2-theraphotoxin-Bs1a (34 aa).

Intrachain disulfides connect Cys-2–Cys-16, Cys-9–Cys-21, and Cys-15–Cys-28.

Expressed by the venom gland.

It localises to the secreted. The protein is U2-theraphotoxin-Bs1a of Brachypelma smithi (Mexican red knee tarantula).